Consider the following 262-residue polypeptide: L-aspartate dehydrogenase (262 aa).

The NAD(+) site is built by A128 and N183. Residue H213 is part of the active site.

The protein belongs to the L-aspartate dehydrogenase family.

It catalyses the reaction L-aspartate + NADP(+) + H2O = oxaloacetate + NH4(+) + NADPH + H(+). The enzyme catalyses L-aspartate + NAD(+) + H2O = oxaloacetate + NH4(+) + NADH + H(+). It participates in cofactor biosynthesis; NAD(+) biosynthesis; iminoaspartate from L-aspartate (dehydrogenase route): step 1/1. Specifically catalyzes the NAD or NADP-dependent dehydrogenation of L-aspartate to iminoaspartate. The sequence is that of L-aspartate dehydrogenase from Methanopyrus kandleri (strain AV19 / DSM 6324 / JCM 9639 / NBRC 100938).